We begin with the raw amino-acid sequence, 603 residues long: Polypeptide N-acetylgalactosaminyltransferase 10 (603 aa).

At methionine 1 to alanine 11 the chain is on the cytoplasmic side. A helical; Signal-anchor for type II membrane protein transmembrane segment spans residues valine 12 to tyrosine 31. The Lumenal portion of the chain corresponds to arginine 32 to asparagine 603. The disordered stretch occupies residues glycine 38 to glutamine 59. A compositionally biased stretch (low complexity) spans alanine 45–serine 55. Asparagine 124 and asparagine 146 each carry an N-linked (GlcNAc...) asparagine glycan. 5 disulfides stabilise this stretch: cysteine 135–cysteine 365, cysteine 356–cysteine 432, cysteine 471–cysteine 488, cysteine 523–cysteine 538, and cysteine 563–cysteine 578. The tract at residues leucine 144 to arginine 253 is catalytic subdomain A. Histidine 154, glutamate 156, aspartate 185, and arginine 214 together coordinate substrate. Aspartate 237 lines the Mn(2+) pocket. Residue serine 238 coordinates substrate. Mn(2+) is bound at residue histidine 239. The catalytic subdomain B stretch occupies residues proline 311–arginine 373. A substrate-binding site is contributed by tryptophan 342. Histidine 370 is a binding site for Mn(2+). Substrate contacts are provided by arginine 373 and tyrosine 378. The flexible loop stretch occupies residues arginine 373–valine 384. The region spanning alanine 458–glutamate 590 is the Ricin B-type lectin domain. Residue asparagine 593 is glycosylated (N-linked (GlcNAc...) asparagine).

This sequence belongs to the glycosyltransferase 2 family. GalNAc-T subfamily. Mn(2+) is required as a cofactor. As to expression, widely expressed. Expressed at high level in small intestine, and at intermediate levels in stomach, pancreas, ovary, thyroid gland and spleen. Weakly expressed in other tissues.

Its subcellular location is the golgi apparatus membrane. The catalysed reaction is L-seryl-[protein] + UDP-N-acetyl-alpha-D-galactosamine = a 3-O-[N-acetyl-alpha-D-galactosaminyl]-L-seryl-[protein] + UDP + H(+). It carries out the reaction L-threonyl-[protein] + UDP-N-acetyl-alpha-D-galactosamine = a 3-O-[N-acetyl-alpha-D-galactosaminyl]-L-threonyl-[protein] + UDP + H(+). It participates in protein modification; protein glycosylation. In terms of biological role, catalyzes the initial reaction in O-linked oligosaccharide biosynthesis, the transfer of an N-acetyl-D-galactosamine residue to a serine or threonine residue on the protein receptor. Has activity toward Muc5Ac and EA2 peptide substrates. The sequence is that of Polypeptide N-acetylgalactosaminyltransferase 10 (GALNT10) from Homo sapiens (Human).